The chain runs to 552 residues: Macrophage colony-stimulating factor 1 (552 aa).

The N-terminal stretch at 1-32 (MTARGAAGRCPSSTWLGSRLLLVCLLMSRSIA) is a signal peptide. Topologically, residues 33–492 (KEVSEHCSHM…EGSSDPQIPE (460 aa)) are extracellular. 3 disulfide bridges follow: C39-C122, C80-C171, and C134-C178. N-linked (GlcNAc...) asparagine glycans are attached at residues N107, N154, and N172. Residues 197 to 207 (TPSSDPASASP) are compositionally biased toward low complexity. Residues 197–293 (TPSSDPASAS…GGPVPGVEDI (97 aa)) form a disordered region. Over residues 254–267 (PRSTCQTLESTEQP) the composition is skewed to polar residues. The segment covering 268–278 (NHGDRLTEDSQ) has biased composition (basic and acidic residues). Residue S308 is glycosylated (O-linked (Xyl...) (chondroitin sulfate) serine). Disordered stretches follow at residues 321–412 (KFSP…RVSN) and 439–465 (GKRS…ARPV). Composition is skewed to basic and acidic residues over residues 350–364 (STED…DRPL), 382–396 (EKTD…DHQE), and 439–450 (GKRSTRDRRSPA). T360 carries O-linked (GalNAc...) threonine glycosylation. Residues 493–515 (SVFHLLVPGIILVLLTVGGLLFY) traverse the membrane as a helical segment. Topologically, residues 516 to 552 (KWKWRSHRDPQTLDSSVGRPEDSSLTQDEDRQVELPV) are cytoplasmic. A disordered region spans residues 525–552 (PQTLDSSVGRPEDSSLTQDEDRQVELPV). Basic and acidic residues predominate over residues 543-552 (DEDRQVELPV).

In terms of assembly, homodimer or heterodimer; disulfide-linked. Likely to exist in multiple forms: homodimer consisting of 2 identical 150-200 kDa proteoglycan subunits, heterodimer consisting of a 150-200 kDa proteoglycan subunit and a truncated 43 kDa subunit, and homodimer consisting of 2 identical 43 kDa subunits. Interacts with CSF1R. Post-translationally, N-glycosylated. In terms of processing, O-glycosylated; contains chondroitin sulfate.

It is found in the cell membrane. The protein resides in the secreted. The protein localises to the extracellular space. Its function is as follows. Cytokine that plays an essential role in the regulation of survival, proliferation and differentiation of hematopoietic precursor cells, especially mononuclear phagocytes, such as macrophages and monocytes. Promotes the release of pro-inflammatory chemokines, and thereby plays an important role in innate immunity and in inflammatory processes. Plays an important role in the regulation of osteoclast proliferation and differentiation, the regulation of bone resorption, and is required for normal bone development. Required for normal male and female fertility. Promotes reorganization of the actin cytoskeleton, regulates formation of membrane ruffles, cell adhesion and cell migration. Plays a role in lipoprotein clearance. This is Macrophage colony-stimulating factor 1 (Csf1) from Mus musculus (Mouse).